Reading from the N-terminus, the 199-residue chain is dITP/XTP pyrophosphatase (199 aa).

Residue 8–13 coordinates substrate; the sequence is SGNAGK. D69 functions as the Proton acceptor in the catalytic mechanism. Residue D69 participates in Mg(2+) binding. Residues S70, 154 to 157, K177, and 182 to 183 each bind substrate; these read FGYN and HR.

The protein belongs to the HAM1 NTPase family. Homodimer. Mg(2+) serves as cofactor.

The enzyme catalyses XTP + H2O = XMP + diphosphate + H(+). It carries out the reaction dITP + H2O = dIMP + diphosphate + H(+). The catalysed reaction is ITP + H2O = IMP + diphosphate + H(+). Pyrophosphatase that catalyzes the hydrolysis of nucleoside triphosphates to their monophosphate derivatives, with a high preference for the non-canonical purine nucleotides XTP (xanthosine triphosphate), dITP (deoxyinosine triphosphate) and ITP. Seems to function as a house-cleaning enzyme that removes non-canonical purine nucleotides from the nucleotide pool, thus preventing their incorporation into DNA/RNA and avoiding chromosomal lesions. The polypeptide is dITP/XTP pyrophosphatase (Xylella fastidiosa (strain 9a5c)).